A 461-amino-acid chain; its full sequence is Ribitol-5-phosphate transferase FKTN (461 aa).

Over 1–7 (MSRINKN) the chain is Cytoplasmic. Residues 6–27 (KNVVLALLTLTSSAFLLFQLYY) are required and sufficient for interaction with POMGNT1. A helical; Signal-anchor for type II membrane protein membrane pass occupies residues 8–28 (VVLALLTLTSSAFLLFQLYYY). The Lumenal portion of the chain corresponds to 29 to 461 (KHYLSTKNGA…SEWDEVIQLY (433 aa)). N92 carries N-linked (GlcNAc...) asparagine glycosylation.

Belongs to the LicD transferase family. Forms a complex composed of FKTN/fukutin, FKRP and RXYLT1/TMEM5. Interacts (via transmembrane domain) with POMGNT1; the interaction is direct and is required for normal POMGNT1 location in Golgi membranes. As to expression, expressed in the retina (at protein level). Widely expressed with highest expression in brain, heart, pancreas and skeletal muscle. Expressed at similar levels in control fetal and adult brain. Expressed in migrating neurons, including Cajar-Retzius cells and adult cortical neurons, as well as hippocampal pyramidal cells and cerebellar Purkinje cells. No expression observed in the glia limitans, the subpial astrocytes (which contribute to basement membrane formation) or other glial cells.

The protein resides in the golgi apparatus membrane. The protein localises to the cytoplasm. It localises to the nucleus. It carries out the reaction 3-O-[beta-D-GalNAc-(1-&gt;3)-beta-D-GlcNAc-(1-&gt;4)-(O-6-P-alpha-D-Man)]-Thr-[protein] + CDP-L-ribitol = 3-O-[Rib-ol-P-3-beta-D-GalNAc-(1-&gt;3)-beta-D-GlcNAc-(1-&gt;4)-(O-6-P-alpha-D-Man)]-Thr-[protein] + CMP + H(+). It participates in protein modification; protein glycosylation. Its function is as follows. Catalyzes the transfer of a ribitol-phosphate from CDP-ribitol to the distal N-acetylgalactosamine of the phosphorylated O-mannosyl trisaccharide (N-acetylgalactosamine-beta-3-N-acetylglucosamine-beta-4-(phosphate-6-)mannose), a carbohydrate structure present in alpha-dystroglycan (DAG1). This constitutes the first step in the formation of the ribitol 5-phosphate tandem repeat which links the phosphorylated O-mannosyl trisaccharide to the ligand binding moiety composed of repeats of 3-xylosyl-alpha-1,3-glucuronic acid-beta-1. Required for normal location of POMGNT1 in Golgi membranes, and for normal POMGNT1 activity. May interact with and reinforce a large complex encompassing the outside and inside of muscle membranes. Could be involved in brain development. This Homo sapiens (Human) protein is Ribitol-5-phosphate transferase FKTN.